The primary structure comprises 382 residues: WD repeat-containing protein 55 (382 aa).

The span at 1–11 (MDRMCEERAAE) shows a compositional bias: basic and acidic residues. Positions 1-31 (MDRMCEERAAEDGSDEEDPDATEAPARIRDT) are disordered. Residues 12–21 (DGSDEEDPDA) are compositionally biased toward acidic residues. S14 bears the Phosphoserine mark. WD repeat units follow at residues 36–75 (VLEAPASGLAFHPARDLLAAGDVDGDVFVFSYSCQEGETK), 82–121 (HHLKSCRAVVFSEDGQKLVTVSKDKAIHFLDVELGRLERR), 125–163 (AHGAPINSLLLVDENVLATGDDTGGIRLWDQRKEGPLMD), 166–205 (QHEEYIADMALDPDKKLLLTASGDGCLGVFNIKRRRFELL), 208–247 (PQSGDLTSVTLMKYGRKVACGSSEGTIYLFNWDGFGATSD), 250–289 (ALRAESIDCMVPVTESLLCAGSTDGVIRAVNILPNRVVGS), and 293–332 (HAEEPVENLALSHCGCFLASSGHDQRLKFWDMAQLRALVV). Phosphoserine occurs at positions 354 and 381.

It belongs to the WD repeat WDR55 family.

It is found in the nucleus. The protein localises to the nucleolus. Its subcellular location is the cytoplasm. Its function is as follows. Nucleolar protein that acts as a modulator of rRNA synthesis. Plays a central role during organogenesis. This chain is WD repeat-containing protein 55 (WDR55), found in Bos taurus (Bovine).